Reading from the N-terminus, the 235-residue chain is MSVHINAAEGQIAETVLLPGDPLRAKYIADTFLEDVVLYNEVRGMYGFTGTYKGKKVSVQGTGMGVPSMSIYANELVQSYGAKNLIRVGTAGGITPDVKVRDVVIAMSASHDMAQNRVRFNGLDYAPTASFDLLHKAYMTAKEHGIDAKVGQIFTTDQFYQDDFHHFKKWADFGCLAIEMEAAGLYTLAAKHKVNALTILTISDHLLTGEETTAEERQTTFNDMMKVALETAIQL.

An a purine D-ribonucleoside-binding site is contributed by His-4. Phosphate is bound by residues Gly-20, Arg-24, Arg-43, and 87–90 (RVGT). A purine D-ribonucleoside-binding positions include 179–181 (EME) and 203–204 (SD). Asp-204 functions as the Proton donor in the catalytic mechanism.

The protein belongs to the PNP/UDP phosphorylase family. As to quaternary structure, homohexamer; trimer of homodimers.

The catalysed reaction is a purine D-ribonucleoside + phosphate = a purine nucleobase + alpha-D-ribose 1-phosphate. It carries out the reaction a purine 2'-deoxy-D-ribonucleoside + phosphate = a purine nucleobase + 2-deoxy-alpha-D-ribose 1-phosphate. Its function is as follows. Catalyzes the reversible phosphorolytic breakdown of the N-glycosidic bond in the beta-(deoxy)ribonucleoside molecules, with the formation of the corresponding free purine bases and pentose-1-phosphate. This chain is Purine nucleoside phosphorylase DeoD-type, found in Exiguobacterium sibiricum (strain DSM 17290 / CCUG 55495 / CIP 109462 / JCM 13490 / 255-15).